A 303-amino-acid chain; its full sequence is Oxygen-dependent coproporphyrinogen-III oxidase (303 aa).

Residue Ser-93 participates in substrate binding. A divalent metal cation-binding residues include His-97 and His-107. Catalysis depends on His-107, which acts as the Proton donor. A substrate-binding site is contributed by Asn-109 to Arg-111. Residues His-146 and His-176 each contribute to the a divalent metal cation site. An important for dimerization region spans residues Tyr-241–Glu-276.

This sequence belongs to the aerobic coproporphyrinogen-III oxidase family. Homodimer. The cofactor is a divalent metal cation.

It is found in the cytoplasm. The enzyme catalyses coproporphyrinogen III + O2 + 2 H(+) = protoporphyrinogen IX + 2 CO2 + 2 H2O. The protein operates within porphyrin-containing compound metabolism; protoporphyrin-IX biosynthesis; protoporphyrinogen-IX from coproporphyrinogen-III (O2 route): step 1/1. Its function is as follows. Involved in the heme biosynthesis. Catalyzes the aerobic oxidative decarboxylation of propionate groups of rings A and B of coproporphyrinogen-III to yield the vinyl groups in protoporphyrinogen-IX. This chain is Oxygen-dependent coproporphyrinogen-III oxidase, found in Wigglesworthia glossinidia brevipalpis.